Consider the following 639-residue polypeptide: UvrABC system protein C (639 aa).

Residues 20–97 (ERSGVYRMFD…IKKFQPKFNI (78 aa)) enclose the GIY-YIG domain. A UVR domain is found at 207–242 (KELQENLSRKMEELSSQMRFEEAAEIRDRIKALSYV).

Belongs to the UvrC family. As to quaternary structure, interacts with UvrB in an incision complex.

The protein localises to the cytoplasm. Functionally, the UvrABC repair system catalyzes the recognition and processing of DNA lesions. UvrC both incises the 5' and 3' sides of the lesion. The N-terminal half is responsible for the 3' incision and the C-terminal half is responsible for the 5' incision. The chain is UvrABC system protein C from Rickettsia peacockii (strain Rustic).